The following is a 91-amino-acid chain: Small ribosomal subunit protein bS16 (91 aa).

The protein belongs to the bacterial ribosomal protein bS16 family.

This Ruthia magnifica subsp. Calyptogena magnifica protein is Small ribosomal subunit protein bS16.